Reading from the N-terminus, the 59-residue chain is Protein QUA-QUINE STARCH (59 aa).

In terms of tissue distribution, expressed in hypocotyls, leaves, vasculature, hydathodes, trichomes, pedicels, sepals, filaments, mature pollen, stigma papillae, styles, siliques, root and shoot tips, but not in shoot meristem, petals or root epidermis.

The protein localises to the cytoplasm. Involved in regulating carbon and nitrogen allocation to starch and protein. The sequence is that of Protein QUA-QUINE STARCH from Arabidopsis thaliana (Mouse-ear cress).